Consider the following 515-residue polypeptide: Maturase K (515 aa).

The protein belongs to the intron maturase 2 family. MatK subfamily.

The protein localises to the plastid. The protein resides in the chloroplast. In terms of biological role, usually encoded in the trnK tRNA gene intron. Probably assists in splicing its own and other chloroplast group II introns. The polypeptide is Maturase K (Larix laricina (Tamarack)).